Consider the following 27-residue polypeptide: FWGAVWKILSKVLPHIPGTVKWLQEKV.

Expressed by the venom gland.

The protein resides in the secreted. Its function is as follows. Antimicrobial peptide forming an alpha-helix in watery and membraneous environments, enabling it to perforate membranes. Active against Gram-negative bacteria E.coli DH5alpha (MIC=5 uM), E.coli MH1 (MIC=0.6 uM) and P.aeruginosa PAO1 (MIC=10 uM) and against Gram-positive bacteria B.subtilis VKM B-501 (MIC=0.6 uM) and A.globiformis VKM Ac-1112 (MIC=0.2 uM). Has cytolytic and hemolytic activity. The sequence is that of M-ectatotoxin-Eb2a from Ectatomma brunneum (Ant).